The following is a 399-amino-acid chain: Glycerol-1-phosphate dehydrogenase [NAD(P)+] (399 aa).

NAD(+)-binding positions include D56, 118–122 (GTIHD), and 140–143 (TAPS). D145 is a substrate binding site. Position 149 (S149) interacts with NAD(+). D192 provides a ligand contact to substrate. D192 and H272 together coordinate Ni(2+). H276 contacts substrate. H292 contacts Ni(2+).

This sequence belongs to the glycerol-1-phosphate dehydrogenase family. Homodimer. Ni(2+) serves as cofactor.

The protein resides in the cytoplasm. It catalyses the reaction sn-glycerol 1-phosphate + NAD(+) = dihydroxyacetone phosphate + NADH + H(+). The catalysed reaction is sn-glycerol 1-phosphate + NADP(+) = dihydroxyacetone phosphate + NADPH + H(+). Its function is as follows. Catalyzes the NAD(P)H-dependent reduction of dihydroxyacetonephosphate (DHAP or glycerone phosphate) to glycerol 1-phosphate (G1P). The G1P thus generated is probably used for the synthesis of phosphoglycerolipids in Gram-positive bacterial species. The protein is Glycerol-1-phosphate dehydrogenase [NAD(P)+] of Halalkalibacterium halodurans (strain ATCC BAA-125 / DSM 18197 / FERM 7344 / JCM 9153 / C-125) (Bacillus halodurans).